The primary structure comprises 346 residues: Phenylalanine--tRNA ligase alpha subunit (346 aa).

Glu-264 contributes to the Mg(2+) binding site.

The protein belongs to the class-II aminoacyl-tRNA synthetase family. Phe-tRNA synthetase alpha subunit type 1 subfamily. Tetramer of two alpha and two beta subunits. It depends on Mg(2+) as a cofactor.

It is found in the cytoplasm. It carries out the reaction tRNA(Phe) + L-phenylalanine + ATP = L-phenylalanyl-tRNA(Phe) + AMP + diphosphate + H(+). The polypeptide is Phenylalanine--tRNA ligase alpha subunit (Leifsonia xyli subsp. xyli (strain CTCB07)).